A 1719-amino-acid polypeptide reads, in one-letter code: Serine/threonine-protein kinase MRCK alpha (1719 aa).

The region spanning 77–343 (FEILKVIGRG…IEDFKKHPFF (267 aa)) is the Protein kinase domain. ATP-binding positions include 83-91 (IGRGAFGEV) and K106. Catalysis depends on D201, which acts as the Proton acceptor. Phosphoserine; by autocatalysis occurs at positions 222 and 234. T240 is subject to Phosphothreonine; by autocatalysis. Residues 344 to 414 (SGIDWDNIRN…TSSCVLSDRS (71 aa)) form the AGC-kinase C-terminal domain. 3 coiled-coil regions span residues 437–670 (NNLA…KQKQ), 713–820 (SEIK…WEAQ), and 880–943 (LELQ…SEKG). Residues 999-1049 (THQFFVKSFTAPTKCHQCTSLMVGLIRQGCSCEVCGFSCHITCVNKAPTVC) form a Phorbol-ester/DAG-type zinc finger. In terms of domain architecture, PH spans 1069–1188 (GTAYEGHVRI…WVGVLSELHK (120 aa)). One can recognise a CNH domain in the interval 1214 to 1486 (IKTTQAAAII…RPLNTEGSLN (273 aa)). Residue S1532 is modified to Phosphoserine. The 14-residue stretch at 1558 to 1571 (ISNPTNFNHIAHMG) folds into the CRIB domain. The tract at residues 1579–1719 (LKDLPMNPRP…ESTDRGSWDP (141 aa)) is disordered. Residues 1591 to 1606 (SRTVFSGSVSIPSITK) show a composition bias toward polar residues. S1598, S1600, S1616, S1638, S1651, S1656, S1680, S1706, and S1708 each carry phosphoserine. Residues 1612-1627 (GRSMSASSGLSARSSA) show a composition bias toward low complexity. Residues 1652–1661 (PSEGSLSSGG) show a composition bias toward low complexity.

It belongs to the protein kinase superfamily. AGC Ser/Thr protein kinase family. DMPK subfamily. In terms of assembly, homodimer and homotetramer via the coiled coil regions. Interacts tightly with GTP-bound but not GDP-bound CDC42. Forms a tripartite complex with MYO18A and LRP35A with the latter acting as an adapter connecting CDC42BPA and MYO18A. LRP35A binding results in activation of CDC42BPA by abolition of its negative autoregulation. Interacts with LURAP1. Interacts (via AGC-kinase C-terminal domain) with FAM89B/LRAP25 (via LRR repeat). Forms a tripartite complex with FAM89B/LRAP25 and LIMK1. Mg(2+) serves as cofactor. In terms of processing, proteolytically cleaved by caspases upon apoptosis induction. The cleavage at Asp-478 by CASP3 increases its kinase activity (in vitro).

Its subcellular location is the cytoplasm. The protein resides in the cell projection. It is found in the lamellipodium. The catalysed reaction is L-seryl-[protein] + ATP = O-phospho-L-seryl-[protein] + ADP + H(+). The enzyme catalyses L-threonyl-[protein] + ATP = O-phospho-L-threonyl-[protein] + ADP + H(+). Its activity is regulated as follows. Maintained in an inactive, closed conformation by an interaction between the kinase domain and the negative autoregulatory C-terminal coiled-coil region. Agonist binding to the phorbol ester binding site disrupts this, releasing the kinase domain to allow N-terminus-mediated dimerization and kinase activation by transautophosphorylation. Inhibited by chelerythrine chloride. Functionally, serine/threonine-protein kinase which is an important downstream effector of CDC42 and plays a role in the regulation of cytoskeleton reorganization and cell migration. Regulates actin cytoskeletal reorganization via phosphorylation of PPP1R12C and MYL9/MLC2. In concert with MYO18A and LRP35A, is involved in modulating lamellar actomyosin retrograde flow that is crucial to cell protrusion and migration. Phosphorylates: PPP1R12A and LIMK2. May play a role in TFRC-mediated iron uptake. In concert with FAM89B/LRAP25 mediates the targeting of LIMK1 to the lamellipodium resulting in its activation and subsequent phosphorylation of CFL1 which is important for lamellipodial F-actin regulation. Triggers the formation of an extrusion apical actin ring required for epithelial extrusion of apoptotic cells. This Mus musculus (Mouse) protein is Serine/threonine-protein kinase MRCK alpha (Cdc42bpa).